A 172-amino-acid polypeptide reads, in one-letter code: Probable phosphatase YqeG (172 aa).

Its function is as follows. Has low dephosphorylation activity on GMP and glucose-6-phosphate. In Bacillus subtilis (strain 168), this protein is Probable phosphatase YqeG (yqeG).